The primary structure comprises 1014 residues: Klotho (1014 aa).

A signal peptide spans 1–34 (MLARAPPRRPPRLVLLRLLLLHLLLLALRARCLS). The Extracellular portion of the chain corresponds to 35 to 982 (AEPGQGAQTW…TECGFFQTRK (948 aa)). 2 glycosyl hydrolase-1 regions span residues 59-508 (LHDT…DNGF) and 517-955 (LEGT…SNGF). Asn161, Asn285, Asn346, Asn609, Asn614, and Asn696 each carry an N-linked (GlcNAc...) asparagine glycan. The chain crosses the membrane as a helical span at residues 983-1003 (SLLVFISFLVFTFIISLALIF). The Cytoplasmic portion of the chain corresponds to 1004 to 1014 (HYSKKGQRSYK).

Belongs to the glycosyl hydrolase 1 family. Klotho subfamily. In terms of assembly, homodimer. Interacts with FGF23 and FGFR1. Post-translationally, N-glycosylated. Membrane-bound protein is present in distal renal tubules, inner ear, ependymal cells of brain choroid plexus, elongating spermatids and mature oocytes (at protein level). Soluble peptide is present in serum (100 pM) and cerebrospinal fluid. Expressed strongly in kidney, moderately in brain choroid plexus, and at low levels in pituitary, placenta, skeletal muscle, urinary bladder, aorta, pancreas, testis, ovary, colon, thyroid gland and adipocytes.

It localises to the cell membrane. The protein resides in the apical cell membrane. The protein localises to the secreted. It catalyses the reaction a beta-D-glucuronoside + H2O = D-glucuronate + an alcohol. With respect to regulation, inhibited by D-saccharic acid 1,4-lactone and taurocholic acid. In terms of biological role, may have weak glycosidase activity towards glucuronylated steroids. However, it lacks essential active site Glu residues at positions 241 and 874, suggesting it may be inactive as a glycosidase in vivo. May be involved in the regulation of calcium and phosphorus homeostasis by inhibiting the synthesis of active vitamin D. Essential factor for the specific interaction between FGF23 and FGFR1. Functionally, the Klotho peptide generated by cleavage of the membrane-bound isoform may be an anti-aging circulating hormone which would extend life span by inhibiting insulin/IGF1 signaling. The chain is Klotho (Kl) from Mus musculus (Mouse).